Consider the following 530-residue polypeptide: Bifunctional purine biosynthesis protein PurH (530 aa).

The MGS-like domain occupies 2-150; that stretch reads TDHPRRVTRA…KNHDDVAVVV (149 aa).

This sequence belongs to the PurH family.

It carries out the reaction (6R)-10-formyltetrahydrofolate + 5-amino-1-(5-phospho-beta-D-ribosyl)imidazole-4-carboxamide = 5-formamido-1-(5-phospho-D-ribosyl)imidazole-4-carboxamide + (6S)-5,6,7,8-tetrahydrofolate. It catalyses the reaction IMP + H2O = 5-formamido-1-(5-phospho-D-ribosyl)imidazole-4-carboxamide. It participates in purine metabolism; IMP biosynthesis via de novo pathway; 5-formamido-1-(5-phospho-D-ribosyl)imidazole-4-carboxamide from 5-amino-1-(5-phospho-D-ribosyl)imidazole-4-carboxamide (10-formyl THF route): step 1/1. It functions in the pathway purine metabolism; IMP biosynthesis via de novo pathway; IMP from 5-formamido-1-(5-phospho-D-ribosyl)imidazole-4-carboxamide: step 1/1. The chain is Bifunctional purine biosynthesis protein PurH from Bradyrhizobium diazoefficiens (strain JCM 10833 / BCRC 13528 / IAM 13628 / NBRC 14792 / USDA 110).